We begin with the raw amino-acid sequence, 162 residues long: Caveolin-2 (162 aa).

Topologically, residues 1 to 86 (MGLETEKADV…FEISKYIIYK (86 aa)) are cytoplasmic. Phosphotyrosine; by SRC is present on Y19. S20 and S23 each carry phosphoserine. Y27 carries the post-translational modification Phosphotyrosine; by SRC. Residues 87-107 (FLTVFLAIPLAFAAGILFATL) constitute an intramembrane region (helical). Residues 108–162 (SCLHIWITMPFVKTCLMVLPSVQTIWKSVTDVAIAPLCTSVGRSFSSVSLQLSHD) are Cytoplasmic-facing.

This sequence belongs to the caveolin family. Monomer or homodimer. Interacts with CAV1; the interaction forms a stable heterooligomeric complex that is required for targeting to lipid rafts and for caveolae formation. Tyrosine phosphorylated forms do not form heterooligomers with the Tyr-19-phosphorylated form existing as a monomer or dimer, and the Tyr-27-form as a monomer only. Interacts (tyrosine phosphorylated form) with the SH2 domain-containing proteins, RASA1, NCK1 and SRC. Interacts (tyrosine phosphorylated form) with INSR, the interaction (Tyr-27-phosphorylated form) is increased on insulin stimulation. Interacts (Tyr-19 phosphorylated form) with MAPK1 (phosphorylated form); the interaction, promoted by insulin, leads to nuclear location and MAPK1 activation. Interacts with STAT3; the interaction is increased on insulin-induced tyrosine phosphorylation leading to STAT activation. In terms of processing, phosphorylated on serine and tyrosine residues. CAV1 promotes phosphorylation on Ser-23 which then targets the complex to the plasma membrane, lipid rafts and caveolae. Phosphorylation on both Tyr-19 and Tyr-27 is required for insulin-induced 'Ser-727' phosphorylation of STAT3 and its activation. Phosphorylation on Tyr-19 is required for insulin-induced phosphorylation of MAPK1 and DNA binding of STAT3. Tyrosine phosphorylation is induced by both EGF and insulin.

It is found in the nucleus. It localises to the cytoplasm. Its subcellular location is the golgi apparatus membrane. The protein resides in the cell membrane. The protein localises to the membrane. It is found in the caveola. In terms of biological role, may act as a scaffolding protein within caveolar membranes. Interacts directly with G-protein alpha subunits and can functionally regulate their activity. Acts as an accessory protein in conjunction with CAV1 in targeting to lipid rafts and driving caveolae formation. Positive regulator of cellular mitogenesis of the MAPK signaling pathway. Required for the insulin-stimulated nuclear translocation and activation of MAPK1 and STAT3, and the subsequent regulation of cell cycle progression. The protein is Caveolin-2 (CAV2) of Dasypus novemcinctus (Nine-banded armadillo).